A 490-amino-acid chain; its full sequence is Cytochrome P450 2C6 (490 aa).

K249 and K375 each carry N6-acetyllysine. C435 is a heme binding site.

Belongs to the cytochrome P450 family. The cofactor is heme.

The protein localises to the endoplasmic reticulum membrane. It localises to the microsome membrane. It carries out the reaction an organic molecule + reduced [NADPH--hemoprotein reductase] + O2 = an alcohol + oxidized [NADPH--hemoprotein reductase] + H2O + H(+). Cytochromes P450 are a group of heme-thiolate monooxygenases. In liver microsomes, this enzyme is involved in an NADPH-dependent electron transport pathway. It oxidizes a variety of structurally unrelated compounds, including steroids, fatty acids, and xenobiotics. This Rattus norvegicus (Rat) protein is Cytochrome P450 2C6 (Cyp2c6).